The primary structure comprises 440 residues: C4-dicarboxylate transport protein (440 aa).

9 helical membrane-spanning segments follow: residues 7-29 (LYKSLYVQVLVAITIGILLGHYY), 49-66 (MVIAPIIFCTVVSGIAGM), 79-101 (ALLYFEIVSTIALIIGLVVVNVV), 143-165 (VVGAFANGDILQVLMFSVLFGFA), 186-208 (VMFNIINMIMKLAPIGAFGAMAF), 221-243 (LGYLMACFYITCLLFVLVVLGGI), 291-313 (VVGLVIPTGYSFNLDGTSIYLTM), 328-350 (ITHQITLLLVLLVASKGAAGVTG), and 355-377 (VLAATLSAVGHLPVAGLALILGI). The interval 419-440 (GGAPLIDTRPTDDLGVAEGPAR) is disordered.

It belongs to the dicarboxylate/amino acid:cation symporter (DAACS) (TC 2.A.23) family.

It localises to the cell inner membrane. Its function is as follows. Responsible for the transport of dicarboxylates such as succinate, fumarate, and malate from the periplasm across the membrane. In Pseudomonas putida (strain ATCC 47054 / DSM 6125 / CFBP 8728 / NCIMB 11950 / KT2440), this protein is C4-dicarboxylate transport protein.